A 525-amino-acid chain; its full sequence is GMP synthase [glutamine-hydrolyzing] (525 aa).

The Glutamine amidotransferase type-1 domain maps to arginine 9–leucine 207. Cysteine 86 serves as the catalytic Nucleophile. Catalysis depends on residues histidine 181 and glutamate 183. Residues tryptophan 208 to arginine 400 form the GMPS ATP-PPase domain. Serine 235–serine 241 provides a ligand contact to ATP.

As to quaternary structure, homodimer.

The enzyme catalyses XMP + L-glutamine + ATP + H2O = GMP + L-glutamate + AMP + diphosphate + 2 H(+). It participates in purine metabolism; GMP biosynthesis; GMP from XMP (L-Gln route): step 1/1. In terms of biological role, catalyzes the synthesis of GMP from XMP. In Klebsiella pneumoniae subsp. pneumoniae (strain ATCC 700721 / MGH 78578), this protein is GMP synthase [glutamine-hydrolyzing].